Consider the following 495-residue polypeptide: Glycerol kinase (495 aa).

Thr11 is a binding site for ADP. 3 residues coordinate ATP: Thr11, Thr12, and Ser13. Thr11 serves as a coordination point for sn-glycerol 3-phosphate. Arg15 provides a ligand contact to ADP. 4 residues coordinate sn-glycerol 3-phosphate: Arg81, Glu82, Tyr133, and Asp242. Residues Arg81, Glu82, Tyr133, Asp242, and Gln243 each contribute to the glycerol site. Residues Thr264 and Gly307 each coordinate ADP. Residues Thr264, Gly307, Gln311, and Gly410 each coordinate ATP. ADP is bound at residue Gly410.

The protein belongs to the FGGY kinase family.

It carries out the reaction glycerol + ATP = sn-glycerol 3-phosphate + ADP + H(+). The protein operates within polyol metabolism; glycerol degradation via glycerol kinase pathway; sn-glycerol 3-phosphate from glycerol: step 1/1. Its activity is regulated as follows. Inhibited by fructose 1,6-bisphosphate (FBP). Functionally, key enzyme in the regulation of glycerol uptake and metabolism. Catalyzes the phosphorylation of glycerol to yield sn-glycerol 3-phosphate. The sequence is that of Glycerol kinase from Roseobacter denitrificans (strain ATCC 33942 / OCh 114) (Erythrobacter sp. (strain OCh 114)).